We begin with the raw amino-acid sequence, 163 residues long: Olfactory marker protein (163 aa).

Ala2 carries the N-acetylalanine modification.

Belongs to the olfactory marker protein family. Interacts with BEX1 and BEX2. Uniquely associated with mature olfactory receptor neurons.

The protein localises to the cytoplasm. Its function is as follows. May act as a modulator of the olfactory signal-transduction cascade. The polypeptide is Olfactory marker protein (Omp) (Mus musculus (Mouse)).